We begin with the raw amino-acid sequence, 443 residues long: Xaa-Pro dipeptidase (443 aa).

5 residues coordinate Mn(2+): Asp246, Asp257, His339, Glu384, and Glu423.

It belongs to the peptidase M24B family. Bacterial-type prolidase subfamily. The cofactor is Mn(2+).

The enzyme catalyses Xaa-L-Pro dipeptide + H2O = an L-alpha-amino acid + L-proline. Its function is as follows. Splits dipeptides with a prolyl residue in the C-terminal position. The polypeptide is Xaa-Pro dipeptidase (Shigella boydii serotype 18 (strain CDC 3083-94 / BS512)).